The sequence spans 792 residues: Phosphatidylinositol 4-phosphate 5-kinase type-1 sktl (792 aa).

Positions 1–21 (MDTRVELELEPVGKQDRLKDQ) are enriched in basic and acidic residues. Disordered stretches follow at residues 1-74 (MDTR…QPGT), 105-139 (TQTP…KKLG), 423-446 (AKLQ…DAPE), 577-612 (TPTF…PTNA), and 640-714 (AAST…TDLS). Polar residues-rich tracts occupy residues 52-62 (QTASPDQEATP) and 105-131 (TQTP…STTG). The region spanning 155–573 (QSKQIMGSIQ…RFQDAMGKQV (419 aa)) is the PIPK domain. Over residues 642–658 (STSSLQQQRSSNQSNNN) the composition is skewed to low complexity. The span at 678–702 (EPSSTYHTQYSYDSSGRTGSALTSD) shows a compositional bias: polar residues.

As to quaternary structure, interacts with ash2 (via B30.2/SPRY domain); the interaction is direct and seems to be specific for ash2 isoform B.

The protein localises to the cytoplasm. It localises to the cell cortex. Its subcellular location is the nucleus. The protein resides in the chromosome. It is found in the apical cell membrane. The protein localises to the cell projection. It localises to the cilium. Its subcellular location is the flagellum membrane. It catalyses the reaction a 1,2-diacyl-sn-glycero-3-phospho-(1D-myo-inositol 4-phosphate) + ATP = a 1,2-diacyl-sn-glycero-3-phospho-(1D-myo-inositol-4,5-bisphosphate) + ADP + H(+). Functionally, catalyzes the phosphorylation of phosphatidylinositol 4-phosphate (PtdIns[4]P) to form phosphatidylinositol 4,5-bisphosphate (PtdIns[4,5]P(2)), a lipid second messenger that regulates several cellular processes such as signal transduction, vesicle trafficking, actin cytoskeleton dynamics, cell adhesion, and cell motility. PtdIns[4,5]P(2) can directly act as a second messenger or can be utilized as a precursor to generate other second messengers: inositol 1,4,5-trisphosphate (IP3), diacylglycerol (DAG) or phosphatidylinositol-3,4,5-trisphosphate (PtdIns[3,4,5]P(3)). Required for germline development during oogenesis. Sktl is the major phosphatidylinositol 4-phosphate 5-kinase responsible for enrichment of PtdIns[4,5]P(2) in the apical plasma membrane of the oocyte and follicular epithelium cells of the egg chamber during oogenesis. Involved in nuclear anchoring and microtubule organization required for targeted mRNA transport during maintenance of oocyte polarity. The PtdIns[4,5]P(2) produced by sktl is required for maintenance of cellular polarity, prevention of the epithelial-mesenchymal transition process, maintenance of adherens junctions and regulation of apical constriction, probably by affecting polarized cortical recruitment of PAR proteins and their effectors, including baz/bazooka, aPKC, par-1 and l(2)gl. Involved in actin cytoskeleton organization probably through PtdIns[4,5]P(2)-mediated regulation of Moe/Moesin phosphorylation. Involved in PtdIns[4,5]P(2)-mediated apical recruitment of the formin dia/diaphanous in tubular epithelial cells. Involved in anterodorsal cell morphogenesis and eggshell dorsal appendage formation, probably through regulation of apical constriction by PtdIns[4,5]P(2) during tubulogenesis. Required for cell viability or proliferation during wing and eye imaginal disk development. May be involved in cytoskeletal regulation during sensory bristle development. Together with mys/integrin beta localizes to the trailing edge of larval epidermal cells in a JNK signaling-dependent manner during wound healing and is required for setting up cell polarity and re-epithelialization. Required for polarization of elongating spermatid cysts possibly by generation of PtdIns[4,5]P(2) involved in mediating membrane association and orientation of the nucleus-basal body pair. Probably involved in PtdIns[4,5]P(2)-mediated recruitment of exocyst proteins that may mediate membrane addition during spermatid elongation. Involved in maintenance of specialised cell contacts known as slit diaphragms required for nephrocyte morphogenesis and function. Regulates nephrocyte endocytosis, possibly through PtdIns[4,5]P(2)-mediated recruitment of effector proteins. Not required for nervous system development or neurotransmitter release at the neuromuscular junction. Together with ash2 probably plays a role in maintenance of transcriptionally active chromatin through down-regulation of histone H1 hyperphosphorylation. This is Phosphatidylinositol 4-phosphate 5-kinase type-1 sktl from Drosophila melanogaster (Fruit fly).